The chain runs to 104 residues: Co-chaperonin GroES (104 aa).

It belongs to the GroES chaperonin family. Heptamer of 7 subunits arranged in a ring. Interacts with the chaperonin GroEL.

The protein resides in the cytoplasm. In terms of biological role, together with the chaperonin GroEL, plays an essential role in assisting protein folding. The GroEL-GroES system forms a nano-cage that allows encapsulation of the non-native substrate proteins and provides a physical environment optimized to promote and accelerate protein folding. GroES binds to the apical surface of the GroEL ring, thereby capping the opening of the GroEL channel. This Acidiphilium cryptum (strain JF-5) protein is Co-chaperonin GroES.